The primary structure comprises 506 residues: Cobyric acid synthase (506 aa).

One can recognise a GATase cobBQ-type domain in the interval 251 to 448; it reads DITIAIVQLP…LHGLFDSDAF (198 aa). Cysteine 332 functions as the Nucleophile in the catalytic mechanism. The active site involves histidine 440.

Belongs to the CobB/CobQ family. CobQ subfamily.

It functions in the pathway cofactor biosynthesis; adenosylcobalamin biosynthesis. Catalyzes amidations at positions B, D, E, and G on adenosylcobyrinic A,C-diamide. NH(2) groups are provided by glutamine, and one molecule of ATP is hydrogenolyzed for each amidation. The protein is Cobyric acid synthase of Salmonella heidelberg (strain SL476).